The following is a 79-amino-acid chain: UPF0180 protein Bcer98_1118 (79 aa).

It belongs to the UPF0180 family.

In Bacillus cytotoxicus (strain DSM 22905 / CIP 110041 / 391-98 / NVH 391-98), this protein is UPF0180 protein Bcer98_1118.